The following is a 429-amino-acid chain: Ribonuclease E/G-like protein (429 aa).

Asp-290 and Asp-332 together coordinate Mg(2+).

It belongs to the RNase E/G family. The cofactor is Mg(2+).

The protein localises to the plastid. The protein resides in the chloroplast stroma. Involved in intercistronic processing of primary transcripts from chloroplast operons. The endonucleolytic activity of the enzyme depends on the number of phosphates at the 5' end, is inhibited by structured RNA, and preferentially cleaves A/U-rich sequences. This is Ribonuclease E/G-like protein (rne) from Guillardia theta (Cryptophyte).